Here is a 417-residue protein sequence, read N- to C-terminus: MRIIVLGAGVIGVTSAYFLAKAGHEVTVLDRQAGPALETSYANAGEVSPGYSSPWAAPGIPMKAAKWLFMKHAPLIVRPTLDPVTWRWMLQMLANCTSARYAVNKGRMVRIAEYSRDVLMQLRADTGIRYDERMQGTLEVFRSQKQLDGIAKDIAVLKADGVPFEVLDREGCVQVEPGLKPAAHKIVGGLRLPGDETGDCFLFTNALAKLAEGLGVRFVYNVDLKRLRRDGDRIAAVETAQGDYIADSYVAALGSYMPGFLAPLGLDLPIYPVKGYSITVPILDEAKAPVSTVMDEYYKIAITRLGSRIRVGGMAEIARFNKDLPPARQATLTLSVEDLFGGAGDQKKAEFWCGLRPMTPDGTPIIGKTKFGNLFLNGGHGTLGWTMSCGSARLLSDIISGAKPEISTEGLDLSRYR.

3–17 (IIVLGAGVIGVTSAY) is a binding site for FAD.

Belongs to the DadA oxidoreductase family. The cofactor is FAD.

The catalysed reaction is a D-alpha-amino acid + A + H2O = a 2-oxocarboxylate + AH2 + NH4(+). Its pathway is amino-acid degradation; D-alanine degradation; NH(3) and pyruvate from D-alanine: step 1/1. Functionally, oxidative deamination of D-amino acids. The sequence is that of D-amino acid dehydrogenase from Azorhizobium caulinodans (strain ATCC 43989 / DSM 5975 / JCM 20966 / LMG 6465 / NBRC 14845 / NCIMB 13405 / ORS 571).